The primary structure comprises 151 residues: Ribosome maturation factor RimP (151 aa).

It belongs to the RimP family.

The protein localises to the cytoplasm. In terms of biological role, required for maturation of 30S ribosomal subunits. This is Ribosome maturation factor RimP from Shewanella frigidimarina (strain NCIMB 400).